The sequence spans 127 residues: Small ribosomal subunit protein eS8 (127 aa).

Residues 1–24 (MKWQGKSARKPTGGRLVPARGKRK) are disordered.

This sequence belongs to the eukaryotic ribosomal protein eS8 family. As to quaternary structure, part of the 30S ribosomal subunit.

This is Small ribosomal subunit protein eS8 from Methanothrix thermoacetophila (strain DSM 6194 / JCM 14653 / NBRC 101360 / PT) (Methanosaeta thermophila).